The primary structure comprises 258 residues: Large ribosomal subunit protein uL2x (258 aa).

The tract at residues 211 to 231 (HGGGNHQHIGHASTVRRDAPP) is disordered.

Belongs to the universal ribosomal protein uL2 family.

This Arabidopsis thaliana (Mouse-ear cress) protein is Large ribosomal subunit protein uL2x (RPL8C).